We begin with the raw amino-acid sequence, 458 residues long: UDP-N-acetylmuramate--L-alanine ligase (458 aa).

115–121 lines the ATP pocket; that stretch reads GSHGKTT.

Belongs to the MurCDEF family.

The protein localises to the cytoplasm. It carries out the reaction UDP-N-acetyl-alpha-D-muramate + L-alanine + ATP = UDP-N-acetyl-alpha-D-muramoyl-L-alanine + ADP + phosphate + H(+). Its pathway is cell wall biogenesis; peptidoglycan biosynthesis. In terms of biological role, cell wall formation. The protein is UDP-N-acetylmuramate--L-alanine ligase of Anaeromyxobacter dehalogenans (strain 2CP-C).